A 182-amino-acid polypeptide reads, in one-letter code: Protein YIPF6 homolog (182 aa).

Topologically, residues 1 to 45 are cytoplasmic; it reads MIESENPNTLDEPVIQTILRDLKMIGFKLYHVILPRGNAANVLRD. The chain crosses the membrane as a helical span at residues 46-66; sequence WDLWGPLILCLVMAIFLSISA. Topologically, residues 67-70 are lumenal; that stretch reads EEQK. A helical membrane pass occupies residues 71 to 91; that stretch reads ALEFTIVFVVVWCGAAIVTVN. The Cytoplasmic segment spans residues 92-104; that stretch reads GQLLCGNISFFQS. A helical membrane pass occupies residues 105–125; that stretch reads VCILGYCIFPLTIATIIIWII. The Lumenal portion of the chain corresponds to 126–133; the sequence is QNFTMIVK. The helical transmembrane segment at 134–154 threads the bilayer; it reads LPIVGGAWFWSSFASYGFLGS. Residues 155–161 are Cytoplasmic-facing; that stretch reads SVPESRR. The chain crosses the membrane as a helical span at residues 162–182; the sequence is LLAVYPVLLFYLVIAWLVVVQ.

This sequence belongs to the YIP1 family.

It localises to the golgi apparatus membrane. This chain is Protein YIPF6 homolog (yipf6), found in Dictyostelium discoideum (Social amoeba).